The sequence spans 332 residues: Putative D-threonate 4-phosphate dehydrogenase (332 aa).

Substrate contacts are provided by His140 and Thr141. A divalent metal cation-binding residues include His170, His214, and His270. Substrate contacts are provided by Lys278, Asn287, and Arg296.

This sequence belongs to the PdxA family. PdxA2 subfamily. Homodimer. It depends on a divalent metal cation as a cofactor.

The catalysed reaction is 4-O-phospho-D-threonate + NAD(+) = dihydroxyacetone phosphate + CO2 + NADH. Its function is as follows. Catalyzes the NAD-dependent oxidation and subsequent decarboxylation of D-threonate 4-phosphate to produce dihydroxyacetone phosphate (DHAP). The polypeptide is Putative D-threonate 4-phosphate dehydrogenase (Oceanobacillus iheyensis (strain DSM 14371 / CIP 107618 / JCM 11309 / KCTC 3954 / HTE831)).